A 78-amino-acid chain; its full sequence is Probable Vpr-like protein (78 aa).

Positions 35–43 (AIRLLQGLF) match the Nuclear export signal motif. The Nuclear localization signal motif lies at 45–54 (RYRFKKPRVD).

The protein resides in the virion. The protein localises to the host nucleus. In terms of biological role, seems to function as a Vpr-like protein, since it mediates host cell cycle arrest in G2 phase. Cell cycle arrest creates a favorable environment for maximizing viral expression and production. This is Probable Vpr-like protein from Feline immunodeficiency virus (isolate Petaluma) (FIV).